A 563-amino-acid polypeptide reads, in one-letter code: Membrane protein insertase YidC (563 aa).

A helical transmembrane segment spans residues 6–26 (TVLWMIFSFSLLLLWNNWQIH). Residues 36 to 70 (PAPEAAATQQPKADANGTAASSTASIPSSPAAAPA) form a disordered region. Positions 54-70 (AASSTASIPSSPAAAPA) are enriched in low complexity. Transmembrane regions (helical) follow at residues 373–393 (WGWT…PLAA), 443–463 (LPMV…LASV), 482–502 (PFFI…KLNP), and 512–532 (VMMI…AGLV).

The protein belongs to the OXA1/ALB3/YidC family. Type 1 subfamily. Interacts with the Sec translocase complex via SecD. Specifically interacts with transmembrane segments of nascent integral membrane proteins during membrane integration.

Its subcellular location is the cell inner membrane. Its function is as follows. Required for the insertion and/or proper folding and/or complex formation of integral membrane proteins into the membrane. Involved in integration of membrane proteins that insert both dependently and independently of the Sec translocase complex, as well as at least some lipoproteins. Aids folding of multispanning membrane proteins. This is Membrane protein insertase YidC from Bordetella parapertussis (strain 12822 / ATCC BAA-587 / NCTC 13253).